Reading from the N-terminus, the 95-residue chain is Large ribosomal subunit protein uL23 (95 aa).

The protein belongs to the universal ribosomal protein uL23 family. In terms of assembly, part of the 50S ribosomal subunit. Contacts protein L29, and trigger factor when it is bound to the ribosome.

In terms of biological role, one of the early assembly proteins it binds 23S rRNA. One of the proteins that surrounds the polypeptide exit tunnel on the outside of the ribosome. Forms the main docking site for trigger factor binding to the ribosome. This chain is Large ribosomal subunit protein uL23, found in Pediococcus pentosaceus (strain ATCC 25745 / CCUG 21536 / LMG 10740 / 183-1w).